The chain runs to 138 residues: ATP synthase epsilon chain (138 aa).

The protein belongs to the ATPase epsilon chain family. F-type ATPases have 2 components, CF(1) - the catalytic core - and CF(0) - the membrane proton channel. CF(1) has five subunits: alpha(3), beta(3), gamma(1), delta(1), epsilon(1). CF(0) has three main subunits: a, b and c.

Its subcellular location is the cell membrane. Functionally, produces ATP from ADP in the presence of a proton gradient across the membrane. This is ATP synthase epsilon chain from Streptococcus pyogenes serotype M3 (strain ATCC BAA-595 / MGAS315).